Here is a 353-residue protein sequence, read N- to C-terminus: ATP-dependent kinase YFH7 (353 aa).

31–39 (GSPGSGKST) contributes to the ATP binding site.

It belongs to the YFH7 family.

Functionally, ATP-dependent kinase that could be involved in endoplasmic reticulum membrane assembly. In Saccharomyces cerevisiae (strain ATCC 204508 / S288c) (Baker's yeast), this protein is ATP-dependent kinase YFH7 (YFH7).